The following is a 127-amino-acid chain: Sulfiredoxin (127 aa).

Belongs to the sulfiredoxin family. Requires Mg(2+) as cofactor. Post-translationally, forms a transient disulfide bond with TSA1 during the reduction of cysteine sulfinic acid (-SO2H).

It is found in the cytoplasm. The protein localises to the nucleus. It catalyses the reaction S-hydroxy-S-oxy-L-cysteinyl-[peroxiredoxin] + [protein]-dithiol + ATP = S-hydroxy-L-cysteinyl-[peroxiredoxin] + [protein]-disulfide + ADP + phosphate. In terms of biological role, contributes to oxidative stress resistance by reducing cysteine-sulfinic acid formed under exposure to oxidants in the peroxiredoxin TSA1. May catalyze the reduction in a multi-step process by acting both as a specific phosphotransferase and as thioltransferase. In Saccharomyces cerevisiae (strain ATCC 204508 / S288c) (Baker's yeast), this protein is Sulfiredoxin.